The chain runs to 184 residues: 2-C-methyl-D-erythritol 2,4-cyclodiphosphate synthase (184 aa).

Residues Asp-17 and His-19 each coordinate a divalent metal cation. 4-CDP-2-C-methyl-D-erythritol 2-phosphate contacts are provided by residues 17-19 (DVH) and 47-48 (HS). Residue His-55 coordinates a divalent metal cation. Residues 74–78 (FPNTD), Phe-152, and Arg-155 each bind 4-CDP-2-C-methyl-D-erythritol 2-phosphate.

Belongs to the IspF family. As to quaternary structure, homotrimer. It depends on a divalent metal cation as a cofactor.

The enzyme catalyses 4-CDP-2-C-methyl-D-erythritol 2-phosphate = 2-C-methyl-D-erythritol 2,4-cyclic diphosphate + CMP. It participates in isoprenoid biosynthesis; isopentenyl diphosphate biosynthesis via DXP pathway; isopentenyl diphosphate from 1-deoxy-D-xylulose 5-phosphate: step 4/6. Functionally, involved in the biosynthesis of isopentenyl diphosphate (IPP) and dimethylallyl diphosphate (DMAPP), two major building blocks of isoprenoid compounds. Catalyzes the conversion of 4-diphosphocytidyl-2-C-methyl-D-erythritol 2-phosphate (CDP-ME2P) to 2-C-methyl-D-erythritol 2,4-cyclodiphosphate (ME-CPP) with a corresponding release of cytidine 5-monophosphate (CMP). This chain is 2-C-methyl-D-erythritol 2,4-cyclodiphosphate synthase, found in Anaplasma marginale (strain St. Maries).